Consider the following 95-residue polypeptide: Progonadoliberin-1 (95 aa).

Residues 1–23 form the signal peptide; sequence MAPQTSNLWLLLVVMMVMSQGCC. Gln-24 is subject to Pyrrolidone carboxylic acid. The residue at position 33 (Gly-33) is a Glycine amide.

The protein belongs to the GnRH family.

Its subcellular location is the secreted. Functionally, stimulates the secretion of gonadotropins. In Pagrus major (Red sea bream), this protein is Progonadoliberin-1 (gnrh1).